We begin with the raw amino-acid sequence, 161 residues long: Nucleotide-binding protein Bcenmc03_2579 (161 aa).

The protein belongs to the YajQ family.

Functionally, nucleotide-binding protein. This chain is Nucleotide-binding protein Bcenmc03_2579, found in Burkholderia orbicola (strain MC0-3).